We begin with the raw amino-acid sequence, 481 residues long: GTPase Obg (481 aa).

One can recognise an Obg domain in the interval 2–159 (TTFVDRVVLH…LDAVLELKSV (158 aa)). One can recognise an OBG-type G domain in the interval 160–330 (ADIGLVGYPS…LMFAMGELVA (171 aa)). GTP-binding positions include 166-173 (GYPSAGKS), 191-195 (FTTLV), 212-215 (DVPG), 282-285 (NKID), and 311-313 (SAA). Residues Ser173 and Thr193 each coordinate Mg(2+). The OCT domain occupies 348-426 (PKAVDDAGFT…IGEREFDWHP (79 aa)). The segment at 440 to 481 (DQRLAEKTQRPSAAERLAARKARRQRPGDEPESDELDGDSGE) is disordered. Residues 469 to 481 (EPESDELDGDSGE) are compositionally biased toward acidic residues.

This sequence belongs to the TRAFAC class OBG-HflX-like GTPase superfamily. OBG GTPase family. In terms of assembly, monomer. Mg(2+) is required as a cofactor.

The protein resides in the cytoplasm. Its function is as follows. An essential GTPase which binds GTP, GDP and possibly (p)ppGpp with moderate affinity, with high nucleotide exchange rates and a fairly low GTP hydrolysis rate. Plays a role in control of the cell cycle, stress response, ribosome biogenesis and in those bacteria that undergo differentiation, in morphogenesis control. This chain is GTPase Obg, found in Salinispora arenicola (strain CNS-205).